A 194-amino-acid polypeptide reads, in one-letter code: Large ribosomal subunit protein eL15 (194 aa).

Residues 165–194 (AGKKGRGLMNKGKGAEKVRPGIRANKKLGK) form a disordered region.

Belongs to the eukaryotic ribosomal protein eL15 family.

This Methanococcus aeolicus (strain ATCC BAA-1280 / DSM 17508 / OCM 812 / Nankai-3) protein is Large ribosomal subunit protein eL15.